Consider the following 340-residue polypeptide: MEASALKAWELDNNVQLVDPKRDALYNFDADAQKAINKEQPWKQDPSHFKHVRISATALIKMTMHARSGGNLEVMGLMQGYTQGDTFIVTDAFRLPVEGTETRVNAQDEANEYIVEYLDLCRAQGRQENVVGWYHSHPGYGCWLSGIDVDTEAMQQQFQDPFLAVVIDPDRTINSGKVDIGAFRTYPADYKPSGGVTSDGFQAVPLAKAAEFGAHASRYYSLEVSHFKSSLDSHLLELLWHKYWVQTLSQNPLITNRDYGNKQLLDLSSKIKEATTGITRNRAGQGMMMGMSTKSSDKAVDKLAKEANLIASKERSGLIANQVKASLFNDLGSKANPTSE.

In terms of domain architecture, MPN spans 52–189; the sequence is VRISATALIK…IGAFRTYPAD (138 aa). Zn(2+) contacts are provided by histidine 135, histidine 137, and aspartate 148. The short motif at 135–148 is the JAMM motif element; it reads HSHPGYGCWLSGID.

This sequence belongs to the peptidase M67A family. CSN5 subfamily. Component of the COP9 signalosome (CSN) complex.

Its subcellular location is the cytoplasm. It localises to the nucleus. Functionally, catalytic Component of the COP9 signalosome (CSN) complex that acts as an regulator of the ubiquitin (Ubl) conjugation pathway by mediating the deneddylation of the cullin subunit of SCF-type E3 ubiquitin-protein ligase complexes. This chain is COP9 signalosome complex subunit 5 (RRI1), found in Gibberella zeae (strain ATCC MYA-4620 / CBS 123657 / FGSC 9075 / NRRL 31084 / PH-1) (Wheat head blight fungus).